The following is a 40-amino-acid chain: RNA replication protein (40 aa).

Belongs to the potexviruses/carlaviruses RNA replication protein family.

It carries out the reaction RNA(n) + a ribonucleoside 5'-triphosphate = RNA(n+1) + diphosphate. The enzyme catalyses ATP + H2O = ADP + phosphate + H(+). In terms of biological role, RNA replication. The central part of this protein possibly functions as an ATP-binding helicase. The chain is RNA replication protein from Lily symptomless virus (LSV).